Consider the following 548-residue polypeptide: Membrane protein insertase YidC (548 aa).

A helical membrane pass occupies residues 6–26 (NLLVIALLFVSFMIWQAWEQD). Residues 28-56 (NPQPQTQQTTQTTTTAAGSAADQGVPASG) are disordered. A compositionally biased stretch (low complexity) spans 29-42 (PQPQTQQTTQTTTT). 4 helical membrane passes run 350-370 (FVGN…GIMY), 424-444 (FPLI…MGSI), 458-478 (LSAQ…MFFI), and 499-519 (PVIF…YYIV).

It belongs to the OXA1/ALB3/YidC family. Type 1 subfamily. As to quaternary structure, interacts with the Sec translocase complex via SecD. Specifically interacts with transmembrane segments of nascent integral membrane proteins during membrane integration.

The protein resides in the cell inner membrane. In terms of biological role, required for the insertion and/or proper folding and/or complex formation of integral membrane proteins into the membrane. Involved in integration of membrane proteins that insert both dependently and independently of the Sec translocase complex, as well as at least some lipoproteins. Aids folding of multispanning membrane proteins. This is Membrane protein insertase YidC from Salmonella newport (strain SL254).